Reading from the N-terminus, the 590-residue chain is CTP synthase (590 aa).

The tract at residues 1 to 281 (MPALRKHPQT…DAYVVRRLNL (281 aa)) is amidoligase domain. Serine 23 serves as a coordination point for CTP. Position 23 (serine 23) interacts with UTP. ATP-binding positions include 24-29 (SLGKGL) and aspartate 81. 2 residues coordinate Mg(2+): aspartate 81 and glutamate 155. CTP contacts are provided by residues 162–164 (DIE), 202–207 (KTKPTQ), and lysine 238. UTP contacts are provided by residues 202 to 207 (KTKPTQ) and lysine 238. In terms of domain architecture, Glutamine amidotransferase type-1 spans 306–554 (RIALVGKYID…IGAAIDYKAA (249 aa)). Glycine 369 provides a ligand contact to L-glutamine. Catalysis depends on cysteine 396, which acts as the Nucleophile; for glutamine hydrolysis. L-glutamine is bound by residues 397 to 400 (LGLQ), glutamate 419, and arginine 480. Active-site residues include histidine 527 and glutamate 529.

The protein belongs to the CTP synthase family. As to quaternary structure, homotetramer.

The enzyme catalyses UTP + L-glutamine + ATP + H2O = CTP + L-glutamate + ADP + phosphate + 2 H(+). It catalyses the reaction L-glutamine + H2O = L-glutamate + NH4(+). The catalysed reaction is UTP + NH4(+) + ATP = CTP + ADP + phosphate + 2 H(+). Its pathway is pyrimidine metabolism; CTP biosynthesis via de novo pathway; CTP from UDP: step 2/2. Allosterically activated by GTP, when glutamine is the substrate; GTP has no effect on the reaction when ammonia is the substrate. The allosteric effector GTP functions by stabilizing the protein conformation that binds the tetrahedral intermediate(s) formed during glutamine hydrolysis. Inhibited by the product CTP, via allosteric rather than competitive inhibition. Catalyzes the ATP-dependent amination of UTP to CTP with either L-glutamine or ammonia as the source of nitrogen. Regulates intracellular CTP levels through interactions with the four ribonucleotide triphosphates. The polypeptide is CTP synthase (Mycolicibacterium smegmatis (strain ATCC 700084 / mc(2)155) (Mycobacterium smegmatis)).